The chain runs to 112 residues: UPF0212 protein Mboo_1659 (112 aa).

This sequence belongs to the UPF0212 family.

The sequence is that of UPF0212 protein Mboo_1659 from Methanoregula boonei (strain DSM 21154 / JCM 14090 / 6A8).